A 254-amino-acid polypeptide reads, in one-letter code: Phytolongin Phyl1.1 (254 aa).

The region spanning 12 to 113 (CVSRDNQILY…TAMIGSINVE (102 aa)) is the Longin domain. Residues 138 to 173 (ELKSSNLGEQSEGSNSTKAPLLGRLSKQEKKKGKDH) form a disordered region. Residues 145-155 (GEQSEGSNSTK) show a composition bias toward polar residues. Residues 226–246 (IVLAIDAAICLTLFGIWLAIC) form a helical; Anchor for type IV membrane protein membrane-spanning segment.

The protein belongs to the synaptobrevin family.

The protein localises to the membrane. Non-SNARE longin protein involved in membrane-trafficking machinery. This Arabidopsis thaliana (Mouse-ear cress) protein is Phytolongin Phyl1.1.